A 181-amino-acid chain; its full sequence is Protein GrpE (181 aa).

The segment covering 1 to 10 (MENTQENPAT) has biased composition (polar residues). The segment at 1-33 (MENTQENPATPSAEDIGSEKQAAQGAAPAAEAA) is disordered. Residues 21–33 (QAAQGAAPAAEAA) are compositionally biased toward low complexity.

It belongs to the GrpE family. Homodimer.

Its subcellular location is the cytoplasm. Its function is as follows. Participates actively in the response to hyperosmotic and heat shock by preventing the aggregation of stress-denatured proteins, in association with DnaK and GrpE. It is the nucleotide exchange factor for DnaK and may function as a thermosensor. Unfolded proteins bind initially to DnaJ; upon interaction with the DnaJ-bound protein, DnaK hydrolyzes its bound ATP, resulting in the formation of a stable complex. GrpE releases ADP from DnaK; ATP binding to DnaK triggers the release of the substrate protein, thus completing the reaction cycle. Several rounds of ATP-dependent interactions between DnaJ, DnaK and GrpE are required for fully efficient folding. The chain is Protein GrpE from Burkholderia cenocepacia (strain ATCC BAA-245 / DSM 16553 / LMG 16656 / NCTC 13227 / J2315 / CF5610) (Burkholderia cepacia (strain J2315)).